The sequence spans 448 residues: MLKMTLKEVLESIKPKDEERKKVKLIMDELRGIAQEVIEESGEEIEVKFVGSLAKDTYLSGDHDIDMFLAFPLSIPVEKLKSKGLEIAESIGKRLESYEISYAEHPYVRGVYKGYQVDIVPCYNVRDWREVRTAVDRSILHTEWVLKNIKGKNDEVRLLKRFLKGINAYGSEVYRRGFSGYLAEILVIKFGSFLKVLEKADFMLRQKIIDPENWLKREPEIAMKTVKREIEEDKPIIVIDPVDPRRNVAANLSWERYGLFYFKAREFLTKPSTELFFPRDKKGNYLEVLRRKGTHLVTLTFEPPNLVDDIIIPQVERTAKGLARQLELEGFRVLGIDYGRDFIFLEVEEIERPRIKIKKGPLYFTHHGLRFFDKNDIVWIEGKELASEKSSLGFIVDVLEDILRKGQFSAGKNVKDAIVGANIIIDFVPKALAQEAYLFLSREKFRVK.

ATP-binding residues include S52 and K55. CTP contacts are provided by S52 and K55. Mg(2+)-binding residues include D64, D66, and D118. 3 residues coordinate ATP: H141, K160, and Y169. H141, K160, and Y169 together coordinate CTP.

The protein belongs to the tRNA nucleotidyltransferase/poly(A) polymerase family. Archaeal CCA-adding enzyme subfamily. Homodimer. It depends on Mg(2+) as a cofactor.

The catalysed reaction is a tRNA precursor + 2 CTP + ATP = a tRNA with a 3' CCA end + 3 diphosphate. It carries out the reaction a tRNA with a 3' CCA end + 2 CTP + ATP = a tRNA with a 3' CCACCA end + 3 diphosphate. Functionally, catalyzes the addition and repair of the essential 3'-terminal CCA sequence in tRNAs without using a nucleic acid template. Adds these three nucleotides in the order of C, C, and A to the tRNA nucleotide-73, using CTP and ATP as substrates and producing inorganic pyrophosphate. tRNA 3'-terminal CCA addition is required both for tRNA processing and repair. Also involved in tRNA surveillance by mediating tandem CCA addition to generate a CCACCA at the 3' terminus of unstable tRNAs. While stable tRNAs receive only 3'-terminal CCA, unstable tRNAs are marked with CCACCA and rapidly degraded. The chain is CCA-adding enzyme from Pyrococcus abyssi (strain GE5 / Orsay).